A 349-amino-acid chain; its full sequence is MPVERMRMRPWLEEQINSNTIPGLKWLNKEKKIFQIPWMHAARHGWDVEKDAPLFRNWAIHTGKHQPGVDKPDPKTWKANFRCAMNSLPDIEEVKDKSIKKGNNAFRVYRMLPLSERPSKKGKKPKTEKEDKVKHIKQEPVESSLGLSNGVSDLSPEYAVLTSTIKNEVDSTVNIIVVGQSHLDSNIENQEIVTNPPDICQVVEVTTESDEQPVSMSELYPLQISPVSSYAESETTDSVPSDEESAEGRPHWRKRNIEGKQYLSNMGTRGSYLLPGMASFVTSNKPDLQVTIKEESNPVPYNSSWPPFQDLPLSSSMTPASSSSRPDRETRASVIKKTSDITQARVKSC.

A DNA-binding region (IRF tryptophan pentad repeat) is located at residues 5–113; that stretch reads RMRMRPWLEE…NAFRVYRMLP (109 aa). An N6-acetyllysine mark is found at lysine 75 and lysine 78. The interval 117 to 148 is disordered; the sequence is RPSKKGKKPKTEKEDKVKHIKQEPVESSLGLS. Basic and acidic residues predominate over residues 125–140; sequence PKTEKEDKVKHIKQEP. Residue lysine 137 forms a Glycyl lysine isopeptide (Lys-Gly) (interchain with G-Cter in SUMO); alternate linkage. Lysine 137 participates in a covalent cross-link: Glycyl lysine isopeptide (Lys-Gly) (interchain with G-Cter in SUMO2); alternate. A Glycyl lysine isopeptide (Lys-Gly) (interchain with G-Cter in SUMO) cross-link involves residue lysine 166. Position 225 is a phosphoserine (serine 225). Residues 228–239 are compositionally biased toward polar residues; the sequence is SSYAESETTDSV. A disordered region spans residues 228–251; sequence SSYAESETTDSVPSDEESAEGRPH. Lysine 260 participates in a covalent cross-link: Glycyl lysine isopeptide (Lys-Gly) (interchain with G-Cter in SUMO2). Lysine 293 participates in a covalent cross-link: Glycyl lysine isopeptide (Lys-Gly) (interchain with G-Cter in SUMO). The segment at 297 to 349 is disordered; it reads NPVPYNSSWPPFQDLPLSSSMTPASSSSRPDRETRASVIKKTSDITQARVKSC. Positions 314–324 are enriched in low complexity; the sequence is SSSMTPASSSS.

This sequence belongs to the IRF family. Interacts with BRD7, IRF2BP1 and IRF2BP2. Interacts with CREBBP in growing cells; the interaction acetylates IRF2 and regulates IRF2-dependent H4 promoter activity. Acetylated by CBP/ p300 during cell-growth. Acetylation on Lys-75 is required for stimulation of H4 promoter activity. In terms of processing, the major sites of sumoylation are Lys-137 and Lys-293. Sumoylation with SUMO1 increases its transcriptional repressor activity on IRF1 and diminishes its ability to activate ISRE and H4 promoter. Expressed throughout the epithelium of the colon. Also expressed in lamina propria.

The protein resides in the nucleus. Its function is as follows. Specifically binds to the upstream regulatory region of type I IFN and IFN-inducible MHC class I genes (the interferon consensus sequence (ICS)) and represses those genes. Also acts as an activator for several genes including H4 and IL7. Constitutively binds to the ISRE promoter to activate IL7. Involved in cell cycle regulation through binding the site II (HiNF-M) promoter region of H4 and activating transcription during cell growth. Antagonizes IRF1 transcriptional activation. The chain is Interferon regulatory factor 2 (IRF2) from Homo sapiens (Human).